The following is a 534-amino-acid chain: Acyl-CoA-binding domain-containing protein 5 (534 aa).

Residues 41 to 130 (HETRFEAAVK…MKKIIETMPM (90 aa)) enclose the ACB domain. 52-61 (IQSLPKNGSF) is a binding site for an acyl-CoA. Pro-63 carries the post-translational modification Phosphothreonine. Residues 72-76 (YSFYK), Lys-98, and Tyr-117 contribute to the an acyl-CoA site. Phosphothreonine is present on residues Leu-137 and Glu-172. The interval 181 to 225 (TPNAKTVNGKAESSDSGAESEEEEAQEEVKGAEQSDNDKKMMKKS) is disordered. Positions 190 to 219 (KAESSDSGAESEEEEAQEEVKGAEQSDNDK) form a coiled coil. 7 positions are modified to phosphoserine: Ser-193, Ser-194, Ser-196, Ser-200, Ser-215, Ser-279, and Ser-313. Residues 207 to 225 (EEVKGAEQSDNDKKMMKKS) are compositionally biased toward basic and acidic residues. Positions 376 to 385 (EVKHGGEDGR) are enriched in basic and acidic residues. Residues 376 to 442 (EVKHGGEDGR…ERWGSDRGSR (67 aa)) are disordered. Position 400 is a phosphothreonine (Thr-400). The residue at position 428 (Ser-428) is a Phosphoserine. Residues 431-441 (DGERWGSDRGS) show a composition bias toward basic and acidic residues. Residues 447–476 (EQIALVLMRLQEDMQNVLQRLQKLETLTAL) are a coiled coil. Lys-469 is subject to N6-acetyllysine. The helical transmembrane segment at 506–526 (GVLTFAIIWPFIAQWLVYLYY) threads the bilayer.

This sequence belongs to the ATG37 family.

It localises to the peroxisome membrane. In terms of biological role, acyl-CoA binding protein which acts as the peroxisome receptor for pexophagy but is dispensable for aggrephagy and nonselective autophagy. Binds medium- and long-chain acyl-CoA esters. In Homo sapiens (Human), this protein is Acyl-CoA-binding domain-containing protein 5 (ACBD5).